The chain runs to 357 residues: MQILEEKPKEGKVKVKAETLDDLWHLYHIIDPGDIVYAKTLRKQAQRADSLRAEKVEVIPVFLGVQAEKINFHKFANQVRVTGPIVYASREDVPLGKYHTIAIEQGTVVTIQKPRWKEHHIERLKEAVAASKRARVMIVVIDDGEADMALVREYGVEILNSIRHNLGGKRYNTDRESEEMKFFHDVAKTMEEVMKRENVEKAIVAGPGFVKEDFYKFLKEKYPELAKKVVIEDTSVTGRTGIYEVIKRGVVDRVYQENRVAKEVQLVEKVLENIARNNGLVAYGLKEVEEAVNYGAVETLLVLDELLKGELREKVEELMDAVRYSRGEVVVVSSEHEGGEKLKALGGLAALLRFRVK.

The protein belongs to the eukaryotic release factor 1 family. Pelota subfamily. In terms of assembly, monomer. A divalent metal cation is required as a cofactor.

It localises to the cytoplasm. Functionally, may function in recognizing stalled ribosomes, interact with stem-loop structures in stalled mRNA molecules, and effect endonucleolytic cleavage of the mRNA. May play a role in the release non-functional ribosomes and degradation of damaged mRNAs. Has endoribonuclease activity. The chain is Protein pelota homolog from Thermococcus kodakarensis (strain ATCC BAA-918 / JCM 12380 / KOD1) (Pyrococcus kodakaraensis (strain KOD1)).